The sequence spans 600 residues: DNA mismatch repair protein MutL (600 aa).

Residues 348–375 (QPQAQRPQTAWSAETSPFRPYQPTTGFS) are disordered. The span at 349–362 (PQAQRPQTAWSAET) shows a compositional bias: polar residues.

The protein belongs to the DNA mismatch repair MutL/HexB family.

This protein is involved in the repair of mismatches in DNA. It is required for dam-dependent methyl-directed DNA mismatch repair. May act as a 'molecular matchmaker', a protein that promotes the formation of a stable complex between two or more DNA-binding proteins in an ATP-dependent manner without itself being part of a final effector complex. In Rhizobium leguminosarum bv. trifolii (strain WSM2304), this protein is DNA mismatch repair protein MutL.